The chain runs to 180 residues: MQNPQNLIWIDLEMTGLDPDSDVIIEMATIVTDSELNTLAEGPVIAIHHSDEVLARMDEWNTRTHGASGLTQRVRESKVSMAEAEAQTIAFLEQWVPKGKSPICGNSICQDRRFLYRHMRNLENYFHYRNLDVSTLKELAARWAPDVRDSFKKGNTHLALDDIRESIAELRHYREHFIKL.

In terms of domain architecture, Exonuclease spans 7-170 (LIWIDLEMTG…DDIRESIAEL (164 aa)). Y128 is a catalytic residue.

Belongs to the oligoribonuclease family.

The protein localises to the cytoplasm. Functionally, 3'-to-5' exoribonuclease specific for small oligoribonucleotides. This is Oligoribonuclease from Pseudomonas putida (strain ATCC 700007 / DSM 6899 / JCM 31910 / BCRC 17059 / LMG 24140 / F1).